The chain runs to 192 residues: SRP-independent targeting protein 2 homolog (192 aa).

A run of 2 helical transmembrane segments spans residues 16–36 and 102–122; these read ILTF…ILRF and WILI…YLLV. The interval 149 to 192 is disordered; that stretch reads LNQPPQQQQQQQQQQHQQHATPSEPVLSKRQQKLRKKAAKYSRP. A compositionally biased stretch (low complexity) spans 151–167; it reads QPPQQQQQQQQQQHQQH. Residues 178-192 show a composition bias toward basic residues; the sequence is RQQKLRKKAAKYSRP.

This sequence belongs to the TMEM208 family.

It localises to the endoplasmic reticulum membrane. Functionally, may function in a SRP (signal recognition particle) and GET (guided entry of tail-anchored proteins) independent pathway for targeting a broad range of substrate proteins to the endoplasmic reticulum. Has a role in meiosis. This is SRP-independent targeting protein 2 homolog from Schizosaccharomyces pombe (strain 972 / ATCC 24843) (Fission yeast).